Here is a 261-residue protein sequence, read N- to C-terminus: Triosephosphate isomerase (261 aa).

Residue 10-12 coordinates substrate; that stretch reads NWK. The active-site Electrophile is H100. The Proton acceptor role is filled by E172. Residues G178, S218, and 239–240 each bind substrate; that span reads GG.

This sequence belongs to the triosephosphate isomerase family. In terms of assembly, homodimer.

It is found in the cytoplasm. It catalyses the reaction D-glyceraldehyde 3-phosphate = dihydroxyacetone phosphate. It participates in carbohydrate biosynthesis; gluconeogenesis. Its pathway is carbohydrate degradation; glycolysis; D-glyceraldehyde 3-phosphate from glycerone phosphate: step 1/1. In terms of biological role, involved in the gluconeogenesis. Catalyzes stereospecifically the conversion of dihydroxyacetone phosphate (DHAP) to D-glyceraldehyde-3-phosphate (G3P). This chain is Triosephosphate isomerase, found in Rhodococcus jostii (strain RHA1).